The chain runs to 574 residues: Septation ring formation regulator EzrA (574 aa).

Residues 1 to 7 (MSSGIVL) lie on the Extracellular side of the membrane. A helical transmembrane segment spans residues 8 to 26 (LIVAIVLVVIIAYLIAIII). The Cytoplasmic segment spans residues 27-574 (RKRNDSLITK…YEKTRETIRF (548 aa)). 3 coiled-coil regions span residues 102 to 141 (NFIR…EEKN), 255 to 368 (KNIE…KDVL), and 409 to 495 (LKNI…EETA).

The protein belongs to the EzrA family.

The protein resides in the cell membrane. In terms of biological role, negative regulator of FtsZ ring formation; modulates the frequency and position of FtsZ ring formation. Inhibits FtsZ ring formation at polar sites. Interacts either with FtsZ or with one of its binding partners to promote depolymerization. This is Septation ring formation regulator EzrA from Streptococcus mutans serotype c (strain ATCC 700610 / UA159).